A 292-amino-acid chain; its full sequence is 33 kDa chaperonin (292 aa).

Cystine bridges form between cysteine 230/cysteine 232 and cysteine 263/cysteine 266.

This sequence belongs to the HSP33 family. Post-translationally, under oxidizing conditions two disulfide bonds are formed involving the reactive cysteines. Under reducing conditions zinc is bound to the reactive cysteines and the protein is inactive.

The protein localises to the cytoplasm. Its function is as follows. Redox regulated molecular chaperone. Protects both thermally unfolding and oxidatively damaged proteins from irreversible aggregation. Plays an important role in the bacterial defense system toward oxidative stress. This Salmonella typhimurium (strain LT2 / SGSC1412 / ATCC 700720) protein is 33 kDa chaperonin.